Reading from the N-terminus, the 145-residue chain is Peptide methionine sulfoxide reductase MsrB (145 aa).

Residues 6–129 (KNERLKQLTD…NSAALRFIPV (124 aa)) enclose the MsrB domain. Cys118 functions as the Nucleophile in the catalytic mechanism.

The protein belongs to the MsrB Met sulfoxide reductase family.

It carries out the reaction L-methionyl-[protein] + [thioredoxin]-disulfide + H2O = L-methionyl-(R)-S-oxide-[protein] + [thioredoxin]-dithiol. The protein is Peptide methionine sulfoxide reductase MsrB of Listeria welshimeri serovar 6b (strain ATCC 35897 / DSM 20650 / CCUG 15529 / CIP 8149 / NCTC 11857 / SLCC 5334 / V8).